A 233-amino-acid polypeptide reads, in one-letter code: tRNA (guanine-N(7)-)-methyltransferase (233 aa).

Positions 64, 89, 116, and 138 each coordinate S-adenosyl-L-methionine. Residue Asp-138 is part of the active site. Residues Lys-142, Asp-174, and 212–215 each bind substrate; that span reads TRYE.

It belongs to the class I-like SAM-binding methyltransferase superfamily. TrmB family.

The enzyme catalyses guanosine(46) in tRNA + S-adenosyl-L-methionine = N(7)-methylguanosine(46) in tRNA + S-adenosyl-L-homocysteine. Its pathway is tRNA modification; N(7)-methylguanine-tRNA biosynthesis. Catalyzes the formation of N(7)-methylguanine at position 46 (m7G46) in tRNA. The protein is tRNA (guanine-N(7)-)-methyltransferase of Rhizobium johnstonii (strain DSM 114642 / LMG 32736 / 3841) (Rhizobium leguminosarum bv. viciae).